The primary structure comprises 128 residues: L-ectoine synthase (128 aa).

Belongs to the ectoine synthase family.

The enzyme catalyses (2S)-4-acetamido-2-aminobutanoate = L-ectoine + H2O. Its pathway is amine and polyamine biosynthesis; ectoine biosynthesis; L-ectoine from L-aspartate 4-semialdehyde: step 3/3. Catalyzes the circularization of gamma-N-acetyl-alpha,gamma-diaminobutyric acid (ADABA) to ectoine (1,4,5,6-tetrahydro-2-methyl-4-pyrimidine carboxylic acid), which is an excellent osmoprotectant. The chain is L-ectoine synthase from Aliivibrio fischeri (strain MJ11) (Vibrio fischeri).